We begin with the raw amino-acid sequence, 349 residues long: tRNA pseudouridine synthase D (349 aa).

Substrate is bound at residue phenylalanine 27. The active-site Nucleophile is the aspartate 80. A substrate-binding site is contributed by asparagine 129. Residues 155–303 enclose the TRUD domain; it reads GVPNYFGAQR…VEAARRAMLL (149 aa). Substrate is bound at residue phenylalanine 329.

Belongs to the pseudouridine synthase TruD family.

The catalysed reaction is uridine(13) in tRNA = pseudouridine(13) in tRNA. Functionally, responsible for synthesis of pseudouridine from uracil-13 in transfer RNAs. This chain is tRNA pseudouridine synthase D, found in Escherichia coli (strain SMS-3-5 / SECEC).